Here is a 220-residue protein sequence, read N- to C-terminus: ATP synthase subunit beta, chloroplastic (220 aa).

It belongs to the ATPase alpha/beta chains family. F-type ATPases have 2 components, CF(1) - the catalytic core - and CF(0) - the membrane proton channel. CF(1) has five subunits: alpha(3), beta(3), gamma(1), delta(1), epsilon(1). CF(0) has four main subunits: a(1), b(1), b'(1) and c(9-12).

The protein resides in the plastid. It is found in the chloroplast thylakoid membrane. The catalysed reaction is ATP + H2O + 4 H(+)(in) = ADP + phosphate + 5 H(+)(out). Its function is as follows. Produces ATP from ADP in the presence of a proton gradient across the membrane. The catalytic sites are hosted primarily by the beta subunits. This chain is ATP synthase subunit beta, chloroplastic (atpB), found in Osmundastrum cinnamomeum (Cinnamon fern).